Reading from the N-terminus, the 434-residue chain is D-amino acid dehydrogenase (434 aa).

3 to 17 provides a ligand contact to FAD; that stretch reads VIVLGSGVIGTTTAY.

Belongs to the DadA oxidoreductase family. It depends on FAD as a cofactor.

It catalyses the reaction a D-alpha-amino acid + A + H2O = a 2-oxocarboxylate + AH2 + NH4(+). It functions in the pathway amino-acid degradation; D-alanine degradation; NH(3) and pyruvate from D-alanine: step 1/1. Functionally, oxidative deamination of D-amino acids. The protein is D-amino acid dehydrogenase of Bordetella petrii (strain ATCC BAA-461 / DSM 12804 / CCUG 43448).